A 182-amino-acid polypeptide reads, in one-letter code: Peptide deformylase (182 aa).

Fe cation-binding residues include Cys-110 and His-153. Glu-154 is an active-site residue. His-157 contributes to the Fe cation binding site.

The protein belongs to the polypeptide deformylase family. Fe(2+) is required as a cofactor.

It carries out the reaction N-terminal N-formyl-L-methionyl-[peptide] + H2O = N-terminal L-methionyl-[peptide] + formate. Removes the formyl group from the N-terminal Met of newly synthesized proteins. Requires at least a dipeptide for an efficient rate of reaction. N-terminal L-methionine is a prerequisite for activity but the enzyme has broad specificity at other positions. In Halalkalibacterium halodurans (strain ATCC BAA-125 / DSM 18197 / FERM 7344 / JCM 9153 / C-125) (Bacillus halodurans), this protein is Peptide deformylase.